A 274-amino-acid chain; its full sequence is Orotidine 5'-phosphate decarboxylase (274 aa).

Lysine 95 (proton donor) is an active-site residue.

It belongs to the OMP decarboxylase family. Type 2 subfamily.

The catalysed reaction is orotidine 5'-phosphate + H(+) = UMP + CO2. It participates in pyrimidine metabolism; UMP biosynthesis via de novo pathway; UMP from orotate: step 2/2. The polypeptide is Orotidine 5'-phosphate decarboxylase (Verminephrobacter eiseniae (strain EF01-2)).